The primary structure comprises 806 residues: MGSSKKHRGEKEAAGTTAAAGTGGTTEQPPRHREHKKHKHRSSGGGSSGGERRKRSRERGSERGSGRRGAEAEARSGAHGRERSQAEPSERRVKREKRDDGYEAAASSKASSGDASSLSIEETNKLRAKLGLKPLEVNAVKKEAGTKEEPVAADVINPMALRQREELREKLAAAKEKRLLNQKLGKIKTLGEDDPWLDDTAAWIERSRQLQKEKDLAEKRAKLLEEMDQEFGVSTLVEEEFEQRRQDLYSARDLQGLTVEHAIDSFREGETVVLTLKDKGVLQDGEDVLVNVNMVDKERADKNVELRKKKPDYLPYAEDESVDDLAQQKPRSILAKYDEELEGERPHSFRLEQGGMADGLRERELEEIRTKLRLQAQSLSSVGPRLASEYLSPEEMVTFKKTKRRVKKIRKKEKEVIMRADDLLPLGDQTQDGDFGSRLRGRGRRRVPEVEEEALEDEEKDPVAQPPPSDDTRVENMDISDEEDGGALPPGSPEGLEEDEAELELQKQLEKGRRLRQLQQLQQLRDSGEKVLEIVKKLESRQRGWEEEEDPERKGTIVFNATSEFCRTLGEIPTYGLAGNREEQEELMDFERDEERSANGGSESDGEENIGWSTVNLDEEKQHQDFSASSTTILDEEPIVNRGLAAALLLCQNKGLLETTVQKVARVKAPNKSLPSAVYCIEDKMAIDDKYSRREEYRGFTQDFKEKDGYKPDVKIEYVDETGRKLTPKEAFRQLSHRFHGKGSGKMKTERRMKKLDEEALLKKMSSSDTPLGTVALLQEKQKAQKTPYIVLSGSGKSMNANTITK.

A disordered region spans residues M1–E121. The segment covering H32 to S42 has biased composition (basic residues). A compositionally biased stretch (basic and acidic residues) spans E58–G101. Residues A104–S119 show a composition bias toward low complexity. Residues K125 and K133 each participate in a glycyl lysine isopeptide (Lys-Gly) (interchain with G-Cter in SUMO2) cross-link. K141 participates in a covalent cross-link: Glycyl lysine isopeptide (Lys-Gly) (interchain with G-Cter in SUMO1); alternate. K141 participates in a covalent cross-link: Glycyl lysine isopeptide (Lys-Gly) (interchain with G-Cter in SUMO2); alternate. Residues K147 and K188 each participate in a glycyl lysine isopeptide (Lys-Gly) (interchain with G-Cter in SUMO2) cross-link. A coiled-coil region spans residues N157–F231. The residue at position 189 (T189) is a Phosphothreonine. K277 is covalently cross-linked (Glycyl lysine isopeptide (Lys-Gly) (interchain with G-Cter in SUMO2)). S321 bears the Phosphoserine mark. Glycyl lysine isopeptide (Lys-Gly) (interchain with G-Cter in SUMO2) cross-links involve residues K329 and K336. S348 carries the post-translational modification Phosphoserine. Residues K400 and K414 each participate in a glycyl lysine isopeptide (Lys-Gly) (interchain with G-Cter in SUMO2) cross-link. The tract at residues M418–E504 is disordered. Residue T430 is modified to Phosphothreonine. The span at V450–K460 shows a compositional bias: acidic residues. Phosphoserine is present on residues S480, S492, and S527. Positions E494–S540 form a coiled coil. Residue K554 forms a Glycyl lysine isopeptide (Lys-Gly) (interchain with G-Cter in SUMO2) linkage. Positions A578–I610 are disordered. Phosphoserine is present on residues S597, S602, S604, and S627. Glycyl lysine isopeptide (Lys-Gly) (interchain with G-Cter in SUMO2) cross-links involve residues K654, K663, and K690. Position 701 is a phosphothreonine (T701). Residues K705, K715, K729, K755, and K764 each participate in a glycyl lysine isopeptide (Lys-Gly) (interchain with G-Cter in SUMO2) cross-link. A Phosphoserine modification is found at S767. Phosphothreonine is present on T770. Glycyl lysine isopeptide (Lys-Gly) (interchain with G-Cter in SUMO2) cross-links involve residues K781 and K786. S795 bears the Phosphoserine mark. Residue K797 forms a Glycyl lysine isopeptide (Lys-Gly) (interchain with G-Cter in SUMO2) linkage.

The protein belongs to the SNU66/SART1 family. Identified in the spliceosome C complex. Component of the U4/U6-U5 tri-snRNP complex composed of the U4, U6 and U5 snRNAs and at least PRPF3, PRPF4, PRPF6, PRPF8, PRPF31, SNRNP200, TXNL4A, SNRNP40, DDX23, CD2BP2, PPIH, SNU13, EFTUD2, SART1 and USP39. Interacts with UBL5. Interacts with IVNS1ABP (via Kelch repeats). In terms of processing, sumoylated with SUMO2. In terms of tissue distribution, ubiquitously expressed. Shows a high expression in fetal liver and a low expression in adult liver.

Its subcellular location is the nucleus. Functionally, plays a role in mRNA splicing as a component of the U4/U6-U5 tri-snRNP, one of the building blocks of the spliceosome. May also bind to DNA. This is U4/U6.U5 tri-snRNP-associated protein 1 (Sart1) from Mus musculus (Mouse).